Reading from the N-terminus, the 502-residue chain is 4,4'-diapophytoene desaturase (4,4'-diaponeurosporene-forming) (502 aa).

Residue 5–17 (VIGAGVTGLAAAA) coordinates FAD.

It belongs to the carotenoid/retinoid oxidoreductase family. CrtN subfamily.

The enzyme catalyses 15-cis-4,4'-diapophytoene + 3 FAD + 3 H(+) = all-trans-4,4'-diaponeurosporene + 3 FADH2. The protein operates within carotenoid biosynthesis; staphyloxanthin biosynthesis; staphyloxanthin from farnesyl diphosphate: step 2/5. In terms of biological role, involved in the biosynthesis of the yellow-orange carotenoid staphyloxanthin, which plays a role in the virulence via its protective function against oxidative stress. Catalyzes three successive dehydrogenation reactions that lead to the introduction of three double bonds into 4,4'-diapophytoene (dehydrosqualene), with 4,4'-diapophytofluene and 4,4'-diapo-zeta-carotene as intermediates, and 4,4'-diaponeurosporene (the major deep-yellow pigment in staphylococci strains) as the end product. The chain is 4,4'-diapophytoene desaturase (4,4'-diaponeurosporene-forming) from Staphylococcus aureus (strain COL).